Reading from the N-terminus, the 205-residue chain is Glycerol-3-phosphate acyltransferase (205 aa).

5 consecutive transmembrane segments (helical) span residues 4 to 24, 80 to 100, 107 to 127, 130 to 150, and 155 to 175; these read IAPG…AILV, PFWL…PVFF, GVAT…GVMA, WLLT…SALI, and VWWF…LILL.

The protein belongs to the PlsY family. Probably interacts with PlsX.

The protein resides in the cell inner membrane. It carries out the reaction an acyl phosphate + sn-glycerol 3-phosphate = a 1-acyl-sn-glycero-3-phosphate + phosphate. Its pathway is lipid metabolism; phospholipid metabolism. Functionally, catalyzes the transfer of an acyl group from acyl-phosphate (acyl-PO(4)) to glycerol-3-phosphate (G3P) to form lysophosphatidic acid (LPA). This enzyme utilizes acyl-phosphate as fatty acyl donor, but not acyl-CoA or acyl-ACP. The sequence is that of Glycerol-3-phosphate acyltransferase from Klebsiella pneumoniae subsp. pneumoniae (strain ATCC 700721 / MGH 78578).